Reading from the N-terminus, the 361-residue chain is MTRAFNFSAGPATLPESVLRQAQAEMVEWNGVGASIVEISHRSADFMAVAAAAEADLRSLLSIPDDYAVLFTAGGATTIQALLPLNFAAPGQAADYVITGHWGKTAIKQAATYVDARIAADAQADGFVDIPAAASWTLSPHSAYVHITANETIHGVEFRDTPDVGTLPLFADFSSSIASEPLDISRYGLIYAGAQKNLGPVGISVVIVRRDLLERAGQPRADIFNYASQVARDSMLNTPPTWNWYLLGLTVKWMLEQGGVQEFARRNAEKAALVYGAIDGSGGFYRNLIKPAVRSRMNIPFFLPDERLDALFVSESKAAGLLALKGHKAVGGIRASLYNAMPVAGAQALAAFMHDFQQRHG.

Arg42 serves as a coordination point for L-glutamate. Pyridoxal 5'-phosphate is bound by residues 76-77 (AT), Trp102, Thr152, Asp172, and Gln195. Lys196 carries the N6-(pyridoxal phosphate)lysine modification. Position 237–238 (237–238 (NT)) interacts with pyridoxal 5'-phosphate.

This sequence belongs to the class-V pyridoxal-phosphate-dependent aminotransferase family. SerC subfamily. As to quaternary structure, homodimer. Pyridoxal 5'-phosphate serves as cofactor.

The protein resides in the cytoplasm. The catalysed reaction is O-phospho-L-serine + 2-oxoglutarate = 3-phosphooxypyruvate + L-glutamate. It catalyses the reaction 4-(phosphooxy)-L-threonine + 2-oxoglutarate = (R)-3-hydroxy-2-oxo-4-phosphooxybutanoate + L-glutamate. Its pathway is amino-acid biosynthesis; L-serine biosynthesis; L-serine from 3-phospho-D-glycerate: step 2/3. The protein operates within cofactor biosynthesis; pyridoxine 5'-phosphate biosynthesis; pyridoxine 5'-phosphate from D-erythrose 4-phosphate: step 3/5. Catalyzes the reversible conversion of 3-phosphohydroxypyruvate to phosphoserine and of 3-hydroxy-2-oxo-4-phosphonooxybutanoate to phosphohydroxythreonine. The chain is Phosphoserine aminotransferase from Xanthomonas axonopodis pv. citri (strain 306).